The primary structure comprises 165 residues: Coronafacic acid dehydratase (165 aa).

His62 is an active-site residue.

The protein belongs to the thioester dehydratase family.

The protein operates within phytotoxin biosynthesis; coronatine biosynthesis. The polypeptide is Coronafacic acid dehydratase (cfa2) (Pseudomonas savastanoi pv. glycinea (Pseudomonas syringae pv. glycinea)).